A 95-amino-acid chain; its full sequence is Small ribosomal subunit protein uS17 (95 aa).

This sequence belongs to the universal ribosomal protein uS17 family. Part of the 30S ribosomal subunit.

In terms of biological role, one of the primary rRNA binding proteins, it binds specifically to the 5'-end of 16S ribosomal RNA. The polypeptide is Small ribosomal subunit protein uS17 (Phytoplasma australiense).